A 639-amino-acid polypeptide reads, in one-letter code: Elongation factor 4 (639 aa).

Residues 39-221 (TMIRNFCIIA…EIVRRVPAPV (183 aa)) enclose the tr-type G domain. GTP-binding positions include 51–56 (DHGKST) and 168–171 (NKID).

This sequence belongs to the TRAFAC class translation factor GTPase superfamily. Classic translation factor GTPase family. LepA subfamily.

It localises to the cell membrane. The enzyme catalyses GTP + H2O = GDP + phosphate + H(+). Its function is as follows. Required for accurate and efficient protein synthesis under certain stress conditions. May act as a fidelity factor of the translation reaction, by catalyzing a one-codon backward translocation of tRNAs on improperly translocated ribosomes. Back-translocation proceeds from a post-translocation (POST) complex to a pre-translocation (PRE) complex, thus giving elongation factor G a second chance to translocate the tRNAs correctly. Binds to ribosomes in a GTP-dependent manner. The chain is Elongation factor 4 from Frankia casuarinae (strain DSM 45818 / CECT 9043 / HFP020203 / CcI3).